The sequence spans 335 residues: DNA-directed RNA polymerase RPB7 homolog (335 aa).

It belongs to the Asfivirus DNA-directed RNA polymerase RPB7 homolog family. Part of the viral DNA-directed RNA polymerase that consists of 8 polII-like subunits (RPB1, RPB2, RPB3, RPB5, RPB6, RPB7, RPB9, RPB10), a capping enzyme and a termination factor.

It is found in the host cytoplasm. The protein resides in the virion. Its function is as follows. Component of the DNA-directed RNA polymerase (RNAP) that catalyzes the transcription in the cytoplasm of viral DNA into RNA using the four ribonucleoside triphosphates as substrates. This Ornithodoros (relapsing fever ticks) protein is DNA-directed RNA polymerase RPB7 homolog.